Reading from the N-terminus, the 145-residue chain is Bacilliredoxin Acid345_1880 (145 aa).

It belongs to the bacilliredoxin family.

The sequence is that of Bacilliredoxin Acid345_1880 from Koribacter versatilis (strain Ellin345).